We begin with the raw amino-acid sequence, 147 residues long: MRLHDLKPAEGARRERKRVGRGIGSGHGKTSGRGQKGQKARSGGGVRPGFEGGQMPLTRRLPKRGFTNIFKKEYAIVNVGTLEERFEDGAVITPEALIESGIIKDVKDGVKILGDGDLNKKFTVRAHKFSQSAIEKIQAVGGKAEVI.

The segment covering methionine 1–arginine 13 has biased composition (basic and acidic residues). Residues methionine 1–threonine 58 are disordered. Gly residues-rich tracts occupy residues arginine 21 to glutamine 35 and serine 42 to glycine 52.

This sequence belongs to the universal ribosomal protein uL15 family. Part of the 50S ribosomal subunit.

Its function is as follows. Binds to the 23S rRNA. The polypeptide is Large ribosomal subunit protein uL15 (Thermoanaerobacter sp. (strain X514)).